Consider the following 295-residue polypeptide: Probable WRKY transcription factor 46 (295 aa).

The WRKY DNA-binding region spans 98 to 166 (QENGSIDDGH…YLGNHTCNNI (69 aa)).

The protein belongs to the WRKY group III family. In terms of assembly, binds to BZR2/BES1 to cooperatively regulate the expression of target genes. Post-translationally, phosphorylated and destabilized by ASK7/BIN2. In terms of tissue distribution, expressed in guard cells, hypocotyls, and in the vascular tissues of cotyledon and root. Mostly expressed in roots, at lower levels in leaves and petioles, and, to a lower extent, in stems, flowers and siliques.

It localises to the nucleus. Transcription factor involved in the regulation of osmotic stress responses and stomatal movement. Interacts specifically with the W box (5'-(T)TGAC[CT]-3'), a frequently occurring elicitor-responsive cis-acting element. Positive regulator of EDS1-dependent defense against E.amylovora. Together with WRKY70 and WRKY53, promotes resistance to P.syringae, probably by enhancing salicylic acid (SA)- dependent genes. Contributes to the suppression of jasmonic acid (MeJA)-induced expression of PDF1.2. Together with WRKY54 and WRKY70, promotes brassinosteroid (BR)-regulated plant growth but prevent drought response by modulating gene expression. This Arabidopsis thaliana (Mouse-ear cress) protein is Probable WRKY transcription factor 46 (WRKY46).